A 467-amino-acid chain; its full sequence is Neutrophil collagenase (467 aa).

Positions 1-20 (MFSLKTLPFLLLLHVQISKA) are cleaved as a signal peptide. Positions 21-100 (FPVSSKEKNT…CGVPDSGGFM (80 aa)) are cleaved as a propeptide — activation peptide. Asparagine 54 and asparagine 73 each carry an N-linked (GlcNAc...) asparagine glycan. A Cysteine switch motif is present at residues 89–96 (PRCGVPDS). Residue cysteine 91 coordinates Zn(2+). Asparagine 112 carries N-linked (GlcNAc...) asparagine glycosylation. Aspartate 157 is a binding site for Ca(2+). 2 residues coordinate Zn(2+): histidine 167 and aspartate 169. Residues aspartate 174, glycine 175, asparagine 177, and isoleucine 179 each contribute to the Ca(2+) site. Position 182 (histidine 182) interacts with Zn(2+). Ca(2+) is bound by residues glycine 189, glycine 191, and aspartate 193. Histidine 195 is a binding site for Zn(2+). Positions 197 and 200 each coordinate Ca(2+). N-linked (GlcNAc...) asparagine glycosylation occurs at asparagine 204. A Zn(2+)-binding site is contributed by histidine 217. Glutamate 218 is an active-site residue. Residues histidine 221 and histidine 227 each coordinate Zn(2+). Asparagine 246 carries N-linked (GlcNAc...) asparagine glycosylation. 4 Hemopexin repeats span residues 276–325 (PKPC…WPSL), 326–372 (PTGI…GFPS), 374–420 (VQAI…FPGI), and 421–464 (ESKV…WLNC). Residues cysteine 279 and cysteine 464 are joined by a disulfide bond. Aspartate 286 is a Ca(2+) binding site. Ca(2+) contacts are provided by aspartate 378 and aspartate 425.

It belongs to the peptidase M10A family. Ca(2+) serves as cofactor. The cofactor is Zn(2+). Neutrophils.

It localises to the cytoplasmic granule. The protein localises to the secreted. Its subcellular location is the extracellular space. The protein resides in the extracellular matrix. The catalysed reaction is Cleavage of interstitial collagens in the triple helical domain. Unlike EC 3.4.24.7, this enzyme cleaves type III collagen more slowly than type I.. Its activity is regulated as follows. Cannot be activated without removal of the activation peptide. Can degrade fibrillar type I, II, and III collagens. The protein is Neutrophil collagenase (MMP8) of Homo sapiens (Human).